Reading from the N-terminus, the 228-residue chain is Sodium channel regulatory subunit beta-4 (228 aa).

Positions 1–30 are cleaved as a signal peptide; that stretch reads MSRAGNRGNTQARWLGTGLLGLFLLPMYLS. The region spanning 31 to 148 is the Ig-like C2-type domain; that stretch reads LEVSVGKATT…KDLNNSATIF (118 aa). Topologically, residues 31–161 are extracellular; sequence LEVSVGKATT…VDKLEKVDNT (131 aa). Residues Asn-45, Asn-71, Asn-113, and Asn-142 are each glycosylated (N-linked (GlcNAc...) asparagine). The cysteines at positions 53 and 131 are disulfide-linked. The helical transmembrane segment at 162 to 182 threads the bilayer; it reads VTLIILAVVGGVIGLLVCILL. Residues 183-228 are Cytoplasmic-facing; that stretch reads LKKLITFILKKTREKKKECLVSSSGNDNTENGLPGSKAEEKPPTKV. Positions 199 to 228 are disordered; that stretch reads KECLVSSSGNDNTENGLPGSKAEEKPPTKV. Polar residues predominate over residues 203-213; it reads VSSSGNDNTEN. Residues 219 to 228 are compositionally biased toward basic and acidic residues; that stretch reads KAEEKPPTKV.

Belongs to the sodium channel auxiliary subunit SCN4B (TC 8.A.17) family. In terms of assembly, a voltage-gated sodium (Nav) channel consists of an ion-conducting pore-forming alpha subunit functional on its own that is regulated by one or more beta subunits. The beta subunit SCN4B is disulfide-linked to the pore-forming alpha subunit. Interacts with SCN1A; regulatory subunit of SCN1A/Nav1.1. Interacts with SCN2A; regulatory subunit of SCN2A/Nav1.2. Contains an interchain disulfide bond with SCN2A.

The protein localises to the cell membrane. In terms of biological role, regulatory subunit of multiple voltage-gated sodium (Nav) channels directly mediating the depolarization of excitable membranes. Navs, also called VGSCs (voltage-gated sodium channels) or VDSCs (voltage-dependent sodium channels), operate by switching between closed and open conformations depending on the voltage difference across the membrane. In the open conformation they allow Na(+) ions to selectively pass through the pore, along their electrochemical gradient. The influx of Na+ ions provokes membrane depolarization, initiating the propagation of electrical signals throughout cells and tissues. The accessory beta subunits participate in localization and functional modulation of the Nav channels. Modulates the activity of SCN1A/Nav1.1. Modulates the activity of SCN2A/Nav1.2. The protein is Sodium channel regulatory subunit beta-4 of Mus musculus (Mouse).